The following is a 68-amino-acid chain: Agnoprotein (68 aa).

Residues M1 to R24 lie on the Cytoplasmic side of the membrane. S7 and S11 each carry phosphoserine; by host. Position 21 is a phosphothreonine; by host (T21). Residues A25 to R41 traverse the membrane as a helical; Signal-anchor for type II membrane protein segment. Residues G42–S68 are Extracellular-facing. The tract at residues D44–S68 is disordered.

It belongs to the polyomavirus agnoprotein family. In terms of assembly, homooligomer. Interacts with VP1. Interacts with large T antigen; this interaction may impact upon the activity of T-antigen on the control of viral gene transcription and replication. Interacts with small t antigen. Interacts with host CBX5; this interaction induces the dissociation of CBX5 from LBR, resulting in destabilization of the nuclear envelope. In terms of processing, phosphorylated by host PKC. Phosphorylation alters the stability and may also have an impact on the subcellular location.

The protein localises to the host cytoplasm. The protein resides in the host nucleus membrane. Its subcellular location is the host rough endoplasmic reticulum membrane. It localises to the host cell membrane. Its function is as follows. Alters the structure of the nuclear envelope by interacting with host CBX5 and disrupting CBX5 association with LBR. Involved in the perinuclear-nuclear localization of the capsid protein VP1 during virion assembly and maturation. Plays an important role in the release of progeny virions from infected cells and in viral propagation, probably by acting as a viral ionic channel in the host plasma membrane. Allows influx of extracellular calcium ions in the host cell. May contribute to viral genome transcription and translation of viral late proteins. In Simian virus 12 (strain wt100) (SV-12), this protein is Agnoprotein.